Consider the following 125-residue polypeptide: Small ribosomal subunit protein uS13 (125 aa).

This sequence belongs to the universal ribosomal protein uS13 family. As to quaternary structure, part of the 30S ribosomal subunit. Forms a loose heterodimer with protein S19. Forms two bridges to the 50S subunit in the 70S ribosome.

Its function is as follows. Located at the top of the head of the 30S subunit, it contacts several helices of the 16S rRNA. In the 70S ribosome it contacts the 23S rRNA (bridge B1a) and protein L5 of the 50S subunit (bridge B1b), connecting the 2 subunits; these bridges are implicated in subunit movement. Contacts the tRNAs in the A and P-sites. The protein is Small ribosomal subunit protein uS13 of Orientia tsutsugamushi (strain Boryong) (Rickettsia tsutsugamushi).